The primary structure comprises 245 residues: Phycocyanobilin:ferredoxin oxidoreductase (245 aa).

It belongs to the HY2 family.

It carries out the reaction (2R,3Z)-phycocyanobilin + 4 oxidized [2Fe-2S]-[ferredoxin] = biliverdin IXalpha + 4 reduced [2Fe-2S]-[ferredoxin] + 4 H(+). Catalyzes the four-electron reduction of biliverdin IX-alpha (2-electron reduction at both the A and D rings); the reaction proceeds via an isolatable 2-electron intermediate, 181,182-dihydrobiliverdin. The polypeptide is Phycocyanobilin:ferredoxin oxidoreductase (Rippkaea orientalis (strain PCC 8801 / RF-1) (Cyanothece sp. (strain PCC 8801))).